We begin with the raw amino-acid sequence, 151 residues long: Probable cGMP 3',5'-cyclic phosphodiesterase subunit delta (151 aa).

It belongs to the PDE6D/unc-119 family. Interacts with Pde6.

It localises to the nucleus. The protein resides in the cytoplasm. The chain is Probable cGMP 3',5'-cyclic phosphodiesterase subunit delta from Drosophila virilis (Fruit fly).